Reading from the N-terminus, the 500-residue chain is Flt3-interacting zinc finger protein 1 (500 aa).

The residue at position 1 (methionine 1) is an N-acetylmethionine. A disordered region spans residues 1–24; it reads MEDSSLPVVPAPIAAPGPAPSATA. Residues 9-19 are compositionally biased toward pro residues; sequence VPAPIAAPGPA. C2H2-type zinc fingers lie at residues 29–51, 57–79, 85–107, 113–136, 204–226, and 232–254; these read FHCS…FARH, HACP…LRSH, YRCS…QVVH, YCCL…KRQH, FACG…WAAH, and FKCP…KLTH. Disordered regions lie at residues 255 to 284 and 306 to 328; these read DLQG…ASEV and KLEA…AAAE. A compositionally biased stretch (polar residues) spans 256 to 267; it reads LQGSNAPPTQVW. 5 C2H2-type zinc fingers span residues 336 to 357, 363 to 386, 418 to 440, 446 to 468, and 474 to 496; these read YQCD…LEAH, YGCG…RASH, FGCS…VLVH, FPCL…RLLH, and FPCH…LKLH. The segment at 383-415 is disordered; it reads RASHGEGSGEAAPDGEGNQAAGGPGPGSSSRSK.

In terms of assembly, interacts with FLT3 cytoplasmic catalytic domain, following receptor stimulation, in a kinase-independent manner. Does not interact with other structurally related receptor tyrosine kinases, including KIT, CSF1R and PDGFR. Interacts with NRL. In terms of tissue distribution, widely expressed. In the retina, highest expression in the ganglion cell layer.

Its subcellular location is the cytoplasm. The protein resides in the nucleus. Functionally, may be a transcriptional repressor of NRL function in photoreceptors. Does not repress CRX-mediated transactivation. This chain is Flt3-interacting zinc finger protein 1 (Fiz1), found in Mus musculus (Mouse).